A 210-amino-acid polypeptide reads, in one-letter code: T-cell surface glycoprotein CD8 beta-2 chain (210 aa).

An N-terminal signal peptide occupies residues 1–18; it reads MRPRLWLLLAAQLTVLHG. The Ig-like V-type domain maps to 19 to 132; it reads NSVLQQTPAY…ELTFGKGTQL (114 aa). The Extracellular portion of the chain corresponds to 19-170; the sequence is NSVLQQTPAY…ETQKGPLCSP (152 aa). A disulfide bridge connects residues Cys41 and Cys116. Asn102 is a glycosylation site (N-linked (GlcNAc...) asparagine). The chain crosses the membrane as a helical span at residues 171 to 191; that stretch reads VTLGLLVAGVLVLLVSLGVAM. The Cytoplasmic segment spans residues 192–210; sequence HLCCRRRRARLRFMKQFYK.

In terms of assembly, in general heterodimer of an alpha and a beta chain linked by two disulfide bonds.

The protein resides in the cell membrane. Identifies cytotoxic/suppressor T-cells that interact with MHC class I bearing targets. CD8 is thought to play a role in the process of T-cell mediated killing. The protein is T-cell surface glycoprotein CD8 beta-2 chain of Homo sapiens (Human).